The chain runs to 1241 residues: DNA-directed RNA polymerase subunit beta (1241 aa).

Residues 1186–1210 (EDEIVPTAEKRSSNQDEEALELVDN) are disordered. Over residues 1200 to 1210 (QDEEALELVDN) the composition is skewed to acidic residues.

Belongs to the RNA polymerase beta chain family. In terms of assembly, the RNAP catalytic core consists of 2 alpha, 1 beta, 1 beta' and 1 omega subunit. When a sigma factor is associated with the core the holoenzyme is formed, which can initiate transcription.

It carries out the reaction RNA(n) + a ribonucleoside 5'-triphosphate = RNA(n+1) + diphosphate. Functionally, DNA-dependent RNA polymerase catalyzes the transcription of DNA into RNA using the four ribonucleoside triphosphates as substrates. This Clostridium novyi (strain NT) protein is DNA-directed RNA polymerase subunit beta.